A 200-amino-acid chain; its full sequence is Adenylyl-sulfate kinase (200 aa).

Residue 36–43 (GLSGSGKS) coordinates ATP. Ser110 serves as the catalytic Phosphoserine intermediate.

Belongs to the APS kinase family.

It catalyses the reaction adenosine 5'-phosphosulfate + ATP = 3'-phosphoadenylyl sulfate + ADP + H(+). It functions in the pathway sulfur metabolism; hydrogen sulfide biosynthesis; sulfite from sulfate: step 2/3. Catalyzes the synthesis of activated sulfate. This is Adenylyl-sulfate kinase from Clostridium acetobutylicum (strain ATCC 824 / DSM 792 / JCM 1419 / IAM 19013 / LMG 5710 / NBRC 13948 / NRRL B-527 / VKM B-1787 / 2291 / W).